We begin with the raw amino-acid sequence, 525 residues long: uncharacterized protein (525 aa).

A run of 6 helical transmembrane segments spans residues 7-29, 34-51, 64-82, 92-114, 121-143, and 148-170; these read FLAT…LGQI, LRFG…VGAL, GLGV…GSTF, LMLA…GRLF, VAGL…ATHG, and LVGY…AIIA. RCK C-terminal domains follow at residues 178–257 and 259–341; these read KDNT…LGHV and ERTL…LFGD. 5 helical membrane passes run 351–370, 374–396, 416–438, 443–465, and 502–524; these read ALSL…LMVA, GLQF…GSIH, LGLM…SQAV, LAVI…AAAW, and SAYG…VIVL.

This sequence belongs to the AAE transporter (TC 2.A.81) family.

It is found in the cell membrane. This is an uncharacterized protein from Cutibacterium acnes (strain DSM 16379 / KPA171202) (Propionibacterium acnes).